The chain runs to 349 residues: Signal peptidase I (349 aa).

The next 2 helical transmembrane spans lie at 3–23 and 25–45; these read NLFF…LDYF and LPNT…VLWC. The Cytoplasmic portion of the chain corresponds to 46–80; it reads YHRFVVLPKRHRQVARAEQRSGKTLSEEEKAKIEP. Residues 81-101 form a helical membrane-spanning segment; that stretch reads ISEASEFLSSLFPVLAVVFLV. Residues 102–349 lie on the Periplasmic side of the membrane; the sequence is RSFLFEPFQI…RFERFFTAIK (248 aa). Residues Ser115 and Lys196 contribute to the active site.

Belongs to the peptidase S26 family.

The protein localises to the cell inner membrane. It carries out the reaction Cleavage of hydrophobic, N-terminal signal or leader sequences from secreted and periplasmic proteins.. This is Signal peptidase I (lepB) from Haemophilus influenzae (strain ATCC 51907 / DSM 11121 / KW20 / Rd).